The primary structure comprises 670 residues: E3 ubiquitin-protein ligase MAG2 (670 aa).

Disordered regions lie at residues 1 to 84 (MVEP…TSTR) and 124 to 145 (EVER…RDEH). Positions 20 to 39 (DTLNATSNSSKQGVSNNKRN) are enriched in polar residues. Basic and acidic residues predominate over residues 51–66 (SDGRDNAHNYHGEGRR). Residues 195–250 (CSICLSEEPVAPRMVTCGHIFCLSCLLNFFSIEETVKNKETGYSKKKKYKECPLCG) form an RING-type zinc finger. Residues 609–670 (TEDEKASKEN…LFSSNHQALG (62 aa)) form a disordered region. Over residues 610–622 (EDEKASKENKEFQ) the composition is skewed to basic and acidic residues. The segment covering 637-649 (VTDSTDSPPTSNG) has biased composition (low complexity).

The protein belongs to the RNF10 family.

It localises to the cytoplasm. The catalysed reaction is S-ubiquitinyl-[E2 ubiquitin-conjugating enzyme]-L-cysteine + [acceptor protein]-L-lysine = [E2 ubiquitin-conjugating enzyme]-L-cysteine + N(6)-ubiquitinyl-[acceptor protein]-L-lysine.. It functions in the pathway protein modification; protein ubiquitination. In terms of biological role, E3 ubiquitin-protein ligase involved in the degradation of non-functional 18S rRNAs in response to stalled ribosomes. Catalyzes monoubiquitination of RPS3/uS3 in response to stalled ribosomes, initiating a HEL2-dependent response that activates the degradation of non-functional 18S rRNAs. The polypeptide is E3 ubiquitin-protein ligase MAG2 (Saccharomyces cerevisiae (strain ATCC 204508 / S288c) (Baker's yeast)).